A 260-amino-acid polypeptide reads, in one-letter code: Snake venom serine protease homolog 2 (260 aa).

The N-terminal stretch at 1-18 (MVLIRVLANLLVLQLSYA) is a signal peptide. Residues 19–24 (QKSSEL) constitute a propeptide that is removed on maturation. A Peptidase S1 domain is found at 25–251 (VIGGDECNIN…YTDWIQSIIA (227 aa)). Disulfide bonds link Cys31–Cys165, Cys52–Cys68, Cys100–Cys258, Cys144–Cys212, Cys176–Cys191, and Cys202–Cys227. An N-linked (GlcNAc...) asparagine glycan is attached at Asn123. Asn253 carries an N-linked (GlcNAc...) asparagine glycan.

It belongs to the peptidase S1 family. Snake venom subfamily. As to expression, expressed by the venom gland.

The protein localises to the secreted. In terms of biological role, snake venom serine protease homolog that may act in the hemostasis system of the prey. The chain is Snake venom serine protease homolog 2 from Macrovipera lebetinus (Levantine viper).